Here is a 216-residue protein sequence, read N- to C-terminus: MRPFTKHTGLAAPLDLANVDTDMIIPKQFLKSIKRTGFGKNLFDELRYEDEGQPDQECDGRPLRKDFVLNQDRYKGASVLLARQNFGCGSSREHAPWALDDYGFRSIIAPSFADIFYNNCFKNGLLPIVLQAEEVDQLFAEVALREGAQVIVDLENQTVSSPSGATFEFNVDNFRKHCLLNGLDDIGLTLQQDAAIRRYEEKRMNDAPWLFLPRGQ.

It belongs to the LeuD family. LeuD type 1 subfamily. As to quaternary structure, heterodimer of LeuC and LeuD.

The catalysed reaction is (2R,3S)-3-isopropylmalate = (2S)-2-isopropylmalate. It participates in amino-acid biosynthesis; L-leucine biosynthesis; L-leucine from 3-methyl-2-oxobutanoate: step 2/4. Its function is as follows. Catalyzes the isomerization between 2-isopropylmalate and 3-isopropylmalate, via the formation of 2-isopropylmaleate. In Marinomonas sp. (strain MWYL1), this protein is 3-isopropylmalate dehydratase small subunit.